A 266-amino-acid chain; its full sequence is Undecaprenyl-diphosphatase (266 aa).

A run of 7 helical transmembrane segments spans residues Pro39 to Phe59, Ser86 to Pro106, Val112 to Leu132, Leu153 to Ile173, Phe189 to Ser209, Ile216 to Ile236, and Asn246 to Leu266.

The protein belongs to the UppP family.

The protein resides in the cell inner membrane. It carries out the reaction di-trans,octa-cis-undecaprenyl diphosphate + H2O = di-trans,octa-cis-undecaprenyl phosphate + phosphate + H(+). Its function is as follows. Catalyzes the dephosphorylation of undecaprenyl diphosphate (UPP). Confers resistance to bacitracin. This chain is Undecaprenyl-diphosphatase, found in Prochlorococcus marinus (strain MIT 9215).